The sequence spans 132 residues: uncharacterized protein (132 aa).

Transmembrane regions (helical) follow at residues 7–29, 44–62, 69–88, and 108–130; these read LALLSFFLGLGSFFSFYVAPTLF, VFPVYFGLGIILVGISLFL, LFLSLGILNLLLLLLQEFIV, and GVSMGINLAILLLTLGKVLILIF.

The protein localises to the cell membrane. This is an uncharacterized protein from Aquifex aeolicus (strain VF5).